The sequence spans 341 residues: UDP-3-O-acylglucosamine N-acyltransferase (341 aa).

The Proton acceptor role is filled by H239.

This sequence belongs to the transferase hexapeptide repeat family. LpxD subfamily. As to quaternary structure, homotrimer.

The catalysed reaction is a UDP-3-O-[(3R)-3-hydroxyacyl]-alpha-D-glucosamine + a (3R)-hydroxyacyl-[ACP] = a UDP-2-N,3-O-bis[(3R)-3-hydroxyacyl]-alpha-D-glucosamine + holo-[ACP] + H(+). It functions in the pathway bacterial outer membrane biogenesis; LPS lipid A biosynthesis. Functionally, catalyzes the N-acylation of UDP-3-O-acylglucosamine using 3-hydroxyacyl-ACP as the acyl donor. Is involved in the biosynthesis of lipid A, a phosphorylated glycolipid that anchors the lipopolysaccharide to the outer membrane of the cell. The sequence is that of UDP-3-O-acylglucosamine N-acyltransferase from Idiomarina loihiensis (strain ATCC BAA-735 / DSM 15497 / L2-TR).